The chain runs to 367 residues: Zorya protein ZorE (367 aa).

In terms of biological role, component of antiviral defense system Zorya type II, composed of ZorA, ZorB and ZorE. Expression of Zorya type II in E.coli (strain MG1655) confers resistance to phages SECphi7 and T7. While most T7 infected Zorya-containing cells undergo abortive infection, a minority produce viable phage progeny. These eventually accumulate to a high multiplicity of infection, leading to culture collapse by 170 minutes after initial infection. ZorA and ZorB probably assemble in the cell inner membrane and exert their effect there. This may be a nuclease. This chain is Zorya protein ZorE, found in Escherichia coli (strain ATCC 8739 / DSM 1576 / NBRC 3972 / NCIMB 8545 / WDCM 00012 / Crooks).